The primary structure comprises 382 residues: WD repeat-containing protein 55 (382 aa).

Over residues 1–11 (MDRMCEERAAE) the composition is skewed to basic and acidic residues. The segment at 1–31 (MDRMCEERAAEDGSDEEDPDATEAPARIRDT) is disordered. A compositionally biased stretch (acidic residues) spans 12-21 (DGSDEEDPDA). Position 14 is a phosphoserine (S14). WD repeat units follow at residues 36–75 (VLEAPASGLAFHPARDLLAAGDVDGDVFVFSYSCQEGETK), 82–121 (HHLKSCRAVVFSEDGQKLVTVSKDKAIHFLDVELGRLERR), 125–163 (AHGAPINSLLLVDENVLATGDDTGGIRLWDQRKEGPLMD), 166–205 (QHEEYIADMALDPDKKLLLTASGDGCLGVFNIKRRRFELL), 208–247 (PQSGDLTSVTLMKYGRKVACGSSEGTIYLFNWDGFGATSD), 250–289 (ALRAESIDCMVPVTESLLCAGSTDGVIRAVNILPNRVVGS), and 293–332 (HAEEPVENLALSHCGCFLASSGHDQRLKFWDMAQLRALVV). 2 positions are modified to phosphoserine: S354 and S381.

This sequence belongs to the WD repeat WDR55 family.

The protein resides in the nucleus. It is found in the nucleolus. The protein localises to the cytoplasm. Its function is as follows. Nucleolar protein that acts as a modulator of rRNA synthesis. Plays a central role during organogenesis. In Bos taurus (Bovine), this protein is WD repeat-containing protein 55 (WDR55).